Reading from the N-terminus, the 153-residue chain is Ribonuclease H (153 aa).

The RNase H type-1 domain occupies 4–146 (NNEIVEIYTD…CDRLATEQIK (143 aa)). Mg(2+)-binding residues include Asp13, Glu51, Asp73, and Asp138.

The protein belongs to the RNase H family. In terms of assembly, monomer. Requires Mg(2+) as cofactor.

It localises to the cytoplasm. The catalysed reaction is Endonucleolytic cleavage to 5'-phosphomonoester.. Functionally, endonuclease that specifically degrades the RNA of RNA-DNA hybrids. This is Ribonuclease H from Caldanaerobacter subterraneus subsp. tengcongensis (strain DSM 15242 / JCM 11007 / NBRC 100824 / MB4) (Thermoanaerobacter tengcongensis).